Consider the following 77-residue polypeptide: Large ribosomal subunit protein uL29 (77 aa).

It belongs to the universal ribosomal protein uL29 family.

The polypeptide is Large ribosomal subunit protein uL29 (Mycolicibacterium smegmatis (strain ATCC 700084 / mc(2)155) (Mycobacterium smegmatis)).